A 187-amino-acid chain; its full sequence is ATP synthase subunit b (187 aa).

Residues 31–51 form a helical membrane-spanning segment; sequence VAIMGLAIFVLFLILSYLLFN.

It belongs to the ATPase B chain family. As to quaternary structure, F-type ATPases have 2 components, F(1) - the catalytic core - and F(0) - the membrane proton channel. F(1) has five subunits: alpha(3), beta(3), gamma(1), delta(1), epsilon(1). F(0) has three main subunits: a(1), b(2) and c(10-14). The alpha and beta chains form an alternating ring which encloses part of the gamma chain. F(1) is attached to F(0) by a central stalk formed by the gamma and epsilon chains, while a peripheral stalk is formed by the delta and b chains.

Its subcellular location is the cell membrane. In terms of biological role, f(1)F(0) ATP synthase produces ATP from ADP in the presence of a proton or sodium gradient. F-type ATPases consist of two structural domains, F(1) containing the extramembraneous catalytic core and F(0) containing the membrane proton channel, linked together by a central stalk and a peripheral stalk. During catalysis, ATP synthesis in the catalytic domain of F(1) is coupled via a rotary mechanism of the central stalk subunits to proton translocation. Functionally, component of the F(0) channel, it forms part of the peripheral stalk, linking F(1) to F(0). The sequence is that of ATP synthase subunit b from Lachnoclostridium phytofermentans (strain ATCC 700394 / DSM 18823 / ISDg) (Clostridium phytofermentans).